An 807-amino-acid chain; its full sequence is Zinc finger protein 594 (807 aa).

The segment at 1 to 23 is disordered; the sequence is MKEWKSKMEISEEKKSARAASEK. C2H2-type zinc fingers lie at residues 127 to 149, 155 to 177, 183 to 205, 211 to 233, 239 to 261, 267 to 289, 295 to 317, and 323 to 345; these read YECKECEKTFNRSSNLIIHQRIH, YVCNECGKDSNQSSNLIIHQRIH, YICHECGKDFNQSSNLVRHKQIH, YECKECGKAFKGSSNLVLHQRIH, YLCNKCGKAFSQSTDLIIHHRIH, YECYDCGQMFSQSSHLVPHQRIH, LKCNECEKAFRQHSHLTEHQRLH, and YECHRCGKTFSGRTAFLKHQRLH. The segment at 348-370 adopts a C2H2-type 9; degenerate zinc-finger fold; the sequence is EKIEECEKTFSKDEELREEQRIH. C2H2-type zinc fingers lie at residues 376–398, 404–426, 432–454, 460–482, 488–510, and 516–538; these read YWCNQCGRNFQGTSDLIRHQVTH, YECKECGKTFNQSSDLLRHHRIH, CVCSKCGKSFRGSSDLIRHHRVH, YECSECGKAFSQRSHLVTHQKIH, YQCTECGKAFRRRSLLIQHRRIH, and YECKECGKLFIWRTAFLKHQSLH. Residues 543–562 form a C2H2-type 16; degenerate zinc finger; the sequence is LECEKTFSQDEELRGEQKIH. C2H2-type zinc fingers lie at residues 568–590, 596–618, 624–646, 652–674, 680–702, and 708–730; these read YWCNQCGRAFQGSSDLIRHQVTH, YECKECGKTFNQSSDLLRHHRIH, YVCNKCGKSFRGSSDLIKHHRIH, YECSECGKAFSQRSHLATHQKIH, YQCSECGNAFRRRSLLIQHRRLH, and YECKECGKLFMWHTAFLKHQRLH. The C2H2-type 23; degenerate zinc finger occupies 733–755; sequence EKLEECEKTFSKDEELRKEQRTH. A C2H2-type 24 zinc finger spans residues 761 to 783; the sequence is YWCNQCSRTFQGSSDLIRHQVTH.

It belongs to the krueppel C2H2-type zinc-finger protein family.

It is found in the nucleus. In terms of biological role, may be involved in transcriptional regulation. This is Zinc finger protein 594 (ZNF594) from Homo sapiens (Human).